The chain runs to 215 residues: Endoplasmic reticulum vesicle protein 25 (215 aa).

An N-terminal signal peptide occupies residues Met-1–Gly-21. The Lumenal segment spans residues Leu-22–Lys-184. Positions Pro-34–Ser-125 constitute a GOLD domain. A helical membrane pass occupies residues Trp-185–Leu-205. At Arg-206–Ile-215 the chain is on the cytoplasmic side.

It belongs to the EMP24/GP25L family.

The protein resides in the endoplasmic reticulum membrane. Its subcellular location is the golgi apparatus membrane. In terms of biological role, constituent of COPII-coated endoplasmic reticulum-derived transport vesicles. Required for efficient transport of a subset of secretory proteins to the Golgi. Facilitates retrograde transport from the Golgi to the endoplasmic reticulum. This chain is Endoplasmic reticulum vesicle protein 25 (ERV25), found in Candida albicans (strain SC5314 / ATCC MYA-2876) (Yeast).